Consider the following 328-residue polypeptide: Lactamase-like protein nscB (328 aa).

Histidine 97, histidine 99, aspartate 101, and histidine 102 together coordinate Zn(2+). The active-site Proton donor/acceptor is the aspartate 101.

The protein belongs to the metallo-beta-lactamase superfamily. Zn(2+) serves as cofactor.

Its pathway is secondary metabolite biosynthesis. Functionally, lactamase-like protein; part of the gene cluster that mediates the biosynthesis of neosartoricin, a prenylated anthracenone that exhibits T-cell antiproliferative activity, suggestive of a physiological role as an immunosuppressive agent. The non-reducing polyketide synthase nscA probably synthesizes and cyclizes the decaketide backbone. The hydrolase nscB then mediates the product release through hydrolysis followed by spontaneous decarboxylation. The prenyltransferase nscD catalyzes the addition of the dimethylallyl group to the aromatic C5. The FAD-dependent monooxygenase nscC is then responsible for the stereospecific hydroxylation at C2. There is no gene encoding O-acetyltransferase in the nsc gene cluster; thus, the last step of 2-O-acetylation leading to neosartoricin may be catalyzed by an unidentified O-acetyltransferase. This chain is Lactamase-like protein nscB, found in Neosartorya fischeri (strain ATCC 1020 / DSM 3700 / CBS 544.65 / FGSC A1164 / JCM 1740 / NRRL 181 / WB 181) (Aspergillus fischerianus).